A 365-amino-acid chain; its full sequence is Anhydro-N-acetylmuramic acid kinase (365 aa).

9–16 (GTSLDGVD) contacts ATP.

The protein belongs to the anhydro-N-acetylmuramic acid kinase family.

The enzyme catalyses 1,6-anhydro-N-acetyl-beta-muramate + ATP + H2O = N-acetyl-D-muramate 6-phosphate + ADP + H(+). The protein operates within amino-sugar metabolism; 1,6-anhydro-N-acetylmuramate degradation. Its pathway is cell wall biogenesis; peptidoglycan recycling. In terms of biological role, catalyzes the specific phosphorylation of 1,6-anhydro-N-acetylmuramic acid (anhMurNAc) with the simultaneous cleavage of the 1,6-anhydro ring, generating MurNAc-6-P. Is required for the utilization of anhMurNAc either imported from the medium or derived from its own cell wall murein, and thus plays a role in cell wall recycling. The polypeptide is Anhydro-N-acetylmuramic acid kinase (Rhodopseudomonas palustris (strain BisB18)).